Consider the following 309-residue polypeptide: 1,2-phenylacetyl-CoA epoxidase, subunit A (309 aa).

Residues Arg33, Gln37, 103–106, Asn132, Met193, 202–204, Lys214, and Asn218 each bind substrate; these read KYSS and SPN.

Forms a stable heterotetramer (dimer of heterodimers) with PaaC. The cofactor is Fe cation.

The catalysed reaction is phenylacetyl-CoA + NADPH + O2 + H(+) = 2-(1,2-epoxy-1,2-dihydrophenyl)acetyl-CoA + NADP(+) + H2O. Its pathway is aromatic compound metabolism; phenylacetate degradation. In terms of biological role, component of 1,2-phenylacetyl-CoA epoxidase multicomponent enzyme system which catalyzes the reduction of phenylacetyl-CoA (PA-CoA) to form 1,2-epoxyphenylacetyl-CoA. The subunit A is the catalytic subunit involved in the incorporation of one atom of molecular oxygen into phenylacetyl-CoA. The polypeptide is 1,2-phenylacetyl-CoA epoxidase, subunit A (paaA) (Escherichia coli (strain K12)).